A 457-amino-acid polypeptide reads, in one-letter code: Multidrug resistance protein MdtK (457 aa).

12 consecutive transmembrane segments (helical) span residues 11-31 (LLALAIPVILAQVAQTAMGFV), 53-73 (IWLPAILFGHGLLLALTPVIA), 93-113 (WLAGFVSVLVMIVLWNAGYII), 127-147 (AVGYLRALLWGAPGYLFFQVA), 160-180 (GMVMGFLGLLVNIPVNYIFIY), 188-208 (LGGIGCGVATAAVYWVMFIAM), 243-263 (LPIALALFFEVTLFAVVALLV), 276-296 (IALNFSSLMFVLPMSLAAAVT), 314-334 (AARTGLGVGICMAVVTAIFTV), 350-370 (VVALAAQLMLLAAVYQISDSI), 387-407 (IFFITFTAYWVLGLPSGYILA), and 418-438 (PAGFWMGFIIGLTSAAVLMML).

This sequence belongs to the multi antimicrobial extrusion (MATE) (TC 2.A.66.1) family. MdtK subfamily.

It localises to the cell inner membrane. Its function is as follows. Multidrug efflux pump that functions probably as a Na(+)/drug antiporter. This Salmonella agona (strain SL483) protein is Multidrug resistance protein MdtK.